A 979-amino-acid polypeptide reads, in one-letter code: Glycine dehydrogenase (decarboxylating) (979 aa).

Lys724 is subject to N6-(pyridoxal phosphate)lysine.

This sequence belongs to the GcvP family. The glycine cleavage system is composed of four proteins: P, T, L and H. Pyridoxal 5'-phosphate serves as cofactor.

The enzyme catalyses N(6)-[(R)-lipoyl]-L-lysyl-[glycine-cleavage complex H protein] + glycine + H(+) = N(6)-[(R)-S(8)-aminomethyldihydrolipoyl]-L-lysyl-[glycine-cleavage complex H protein] + CO2. In terms of biological role, the glycine cleavage system catalyzes the degradation of glycine. The P protein binds the alpha-amino group of glycine through its pyridoxal phosphate cofactor; CO(2) is released and the remaining methylamine moiety is then transferred to the lipoamide cofactor of the H protein. In Nostoc punctiforme (strain ATCC 29133 / PCC 73102), this protein is Glycine dehydrogenase (decarboxylating).